The following is a 609-amino-acid chain: Dihydroxy-acid dehydratase (609 aa).

Aspartate 81 is a Mg(2+) binding site. Cysteine 122 contributes to the [2Fe-2S] cluster binding site. Residues aspartate 123 and lysine 124 each coordinate Mg(2+). The residue at position 124 (lysine 124) is an N6-carboxylysine. Cysteine 195 provides a ligand contact to [2Fe-2S] cluster. Mg(2+) is bound at residue glutamate 491. The Proton acceptor role is filled by serine 517.

This sequence belongs to the IlvD/Edd family. Homodimer. It depends on [2Fe-2S] cluster as a cofactor. Requires Mg(2+) as cofactor.

It carries out the reaction (2R)-2,3-dihydroxy-3-methylbutanoate = 3-methyl-2-oxobutanoate + H2O. It catalyses the reaction (2R,3R)-2,3-dihydroxy-3-methylpentanoate = (S)-3-methyl-2-oxopentanoate + H2O. It functions in the pathway amino-acid biosynthesis; L-isoleucine biosynthesis; L-isoleucine from 2-oxobutanoate: step 3/4. Its pathway is amino-acid biosynthesis; L-valine biosynthesis; L-valine from pyruvate: step 3/4. In terms of biological role, functions in the biosynthesis of branched-chain amino acids. Catalyzes the dehydration of (2R,3R)-2,3-dihydroxy-3-methylpentanoate (2,3-dihydroxy-3-methylvalerate) into 2-oxo-3-methylpentanoate (2-oxo-3-methylvalerate) and of (2R)-2,3-dihydroxy-3-methylbutanoate (2,3-dihydroxyisovalerate) into 2-oxo-3-methylbutanoate (2-oxoisovalerate), the penultimate precursor to L-isoleucine and L-valine, respectively. The protein is Dihydroxy-acid dehydratase of Acinetobacter baumannii (strain AB0057).